The following is a 208-amino-acid chain: Outer-membrane lipoprotein carrier protein (208 aa).

An N-terminal signal peptide occupies residues 1–22 (MKKRLCAVLLASPLLFSAAVFA).

This sequence belongs to the LolA family. In terms of assembly, monomer.

The protein resides in the periplasm. Functionally, participates in the translocation of lipoproteins from the inner membrane to the outer membrane. Only forms a complex with a lipoprotein if the residue after the N-terminal Cys is not an aspartate (The Asp acts as a targeting signal to indicate that the lipoprotein should stay in the inner membrane). The chain is Outer-membrane lipoprotein carrier protein from Shewanella baltica (strain OS223).